An 886-amino-acid polypeptide reads, in one-letter code: Valine--tRNA ligase (886 aa).

The 'HIGH' region signature appears at 53–63; the sequence is PNVTGSLHMGH. The short motif at 540-544 is the 'KMSKS' region element; the sequence is KMSKS. An ATP-binding site is contributed by K543. The stretch at 819–851 forms a coiled coil; that stretch reads TIDVAAERRRLEKELAGAQKELASTAAKLANAD.

It belongs to the class-I aminoacyl-tRNA synthetase family. ValS type 1 subfamily. Monomer.

It is found in the cytoplasm. It carries out the reaction tRNA(Val) + L-valine + ATP = L-valyl-tRNA(Val) + AMP + diphosphate. Functionally, catalyzes the attachment of valine to tRNA(Val). As ValRS can inadvertently accommodate and process structurally similar amino acids such as threonine, to avoid such errors, it has a 'posttransfer' editing activity that hydrolyzes mischarged Thr-tRNA(Val) in a tRNA-dependent manner. The protein is Valine--tRNA ligase of Mycobacterium tuberculosis (strain CDC 1551 / Oshkosh).